The sequence spans 419 residues: MKKAFVLEGPLVLRLFRTIMILIFARLGNYIPIPGITEVESFYESSFRNTSIYNLSALSGGSNVISILTLGLGPFFSASLAVQFLVKLYPAFEKLQNEEGEEGRKTIVRYTRILTVLFCIIESFFLSNSLRSFVFNWNSISYFVVAAAVTTGSLVLVWLSEVITERGIGNGSSLLILIGNLSRFRFLINKDDFDSLNVSSQSNLYIIYIIITLVSMLIFSTLSQEGARKIPVVSAKQLIDGVEDDMRRSYIPIRFGQAGVVPIIFSSSILLFLTTSIKQLPNANIATRVILDSVNLQQIFYFFTFLVLIIFFSFFYTLIILSPSDIAKNLKKMSSVIQDTKPGVATKVYIRKFILQASFVGSILLSALILIPSILAAALGVHPLSISGITSLILSFSIINDTVRQVLAYRDTRKFLLSS.

10 consecutive transmembrane segments (helical) span residues 19–39 (IMIL…ITEV), 64–84 (VISI…AVQF), 113–133 (ILTV…LRSF), 143–163 (FVVA…SEVI), 167–189 (GIGN…FLIN), 202–222 (SNLY…FSTL), 255–275 (FGQA…FLTT), 299–319 (IFYF…YTLI), 359–379 (FVGS…AAAL), and 380–400 (GVHP…SIIN).

Belongs to the SecY/SEC61-alpha family. In terms of assembly, component of the plastid Sec protein translocase complex, which is composed of at least SecY and SecE.

It localises to the plastid. Its subcellular location is the chloroplast thylakoid membrane. In terms of biological role, the central subunit of the protein translocation channel SecYE. Consists of two halves formed by TMs 1-5 and 6-10. These two domains form a lateral gate at the front which open onto the bilayer between TMs 2 and 7, and are clamped together by SecE at the back. The channel is closed by both a pore ring composed of hydrophobic SecY resides and a short helix (helix 2A) on the extracellular side of the membrane which forms a plug. This Diacronema lutheri (Unicellular marine alga) protein is Protein translocase subunit SecY.